Reading from the N-terminus, the 343-residue chain is Ribosomal RNA small subunit methyltransferase C (343 aa).

The protein belongs to the methyltransferase superfamily. RsmC family. Monomer.

The protein resides in the cytoplasm. It catalyses the reaction guanosine(1207) in 16S rRNA + S-adenosyl-L-methionine = N(2)-methylguanosine(1207) in 16S rRNA + S-adenosyl-L-homocysteine + H(+). Specifically methylates the guanine in position 1207 of 16S rRNA in the 30S particle. The protein is Ribosomal RNA small subunit methyltransferase C of Shigella sonnei (strain Ss046).